The sequence spans 121 residues: Aspartate 1-decarboxylase (121 aa).

S25 functions as the Schiff-base intermediate with substrate; via pyruvic acid in the catalytic mechanism. Pyruvic acid (Ser) is present on S25. T57 contributes to the substrate binding site. Y58 serves as the catalytic Proton donor. Residue 73 to 75 (GAA) coordinates substrate.

Belongs to the PanD family. In terms of assembly, heterooctamer of four alpha and four beta subunits. It depends on pyruvate as a cofactor. In terms of processing, is synthesized initially as an inactive proenzyme, which is activated by self-cleavage at a specific serine bond to produce a beta-subunit with a hydroxyl group at its C-terminus and an alpha-subunit with a pyruvoyl group at its N-terminus.

It localises to the cytoplasm. It carries out the reaction L-aspartate + H(+) = beta-alanine + CO2. It participates in cofactor biosynthesis; (R)-pantothenate biosynthesis; beta-alanine from L-aspartate: step 1/1. Functionally, catalyzes the pyruvoyl-dependent decarboxylation of aspartate to produce beta-alanine. In Maricaulis maris (strain MCS10) (Caulobacter maris), this protein is Aspartate 1-decarboxylase.